A 1013-amino-acid chain; its full sequence is Alpha-2-macroglobulin homolog (1013 aa).

The segment at 804-844 (AQRGANGERDGLRETVPVRPAGARQLLSGSGSVGADKAGGN) is disordered.

It belongs to the protease inhibitor I39 (alpha-2-macroglobulin) family. Bacterial alpha-2-macroglobulin subfamily.

In Deinococcus radiodurans (strain ATCC 13939 / DSM 20539 / JCM 16871 / CCUG 27074 / LMG 4051 / NBRC 15346 / NCIMB 9279 / VKM B-1422 / R1), this protein is Alpha-2-macroglobulin homolog.